We begin with the raw amino-acid sequence, 280 residues long: Digeranylgeranylglyceryl phosphate synthase (280 aa).

The next 9 membrane-spanning stretches (helical) occupy residues 4–24 (AAYL…AGIL), 27–47 (IIAT…VLTI), 83–103 (LMYA…FTPL), 104–124 (PLAG…SFLK), 128–148 (LIGN…GGAI), 150–170 (GTQG…VMLA), 199–219 (ATIY…LLLY), 222–242 (WGAF…FGAI), and 260–280 (KILK…AVLL).

It belongs to the UbiA prenyltransferase family. DGGGP synthase subfamily. Requires Mg(2+) as cofactor.

It localises to the cell membrane. The catalysed reaction is sn-3-O-(geranylgeranyl)glycerol 1-phosphate + (2E,6E,10E)-geranylgeranyl diphosphate = 2,3-bis-O-(geranylgeranyl)-sn-glycerol 1-phosphate + diphosphate. It participates in membrane lipid metabolism; glycerophospholipid metabolism. In terms of biological role, prenyltransferase that catalyzes the transfer of the geranylgeranyl moiety of geranylgeranyl diphosphate (GGPP) to the C2 hydroxyl of (S)-3-O-geranylgeranylglyceryl phosphate (GGGP). This reaction is the second ether-bond-formation step in the biosynthesis of archaeal membrane lipids. The polypeptide is Digeranylgeranylglyceryl phosphate synthase (Methanospirillum hungatei JF-1 (strain ATCC 27890 / DSM 864 / NBRC 100397 / JF-1)).